We begin with the raw amino-acid sequence, 175 residues long: Thioredoxin M3, chloroplastic (175 aa).

A chloroplast-targeting transit peptide spans 1-59 (MAATATACPAPPPPRSLYRGVALAAPGRRRAGYGASSSAARRWPGCRRRWAAHRIRTVS). The 111-residue stretch at 61–171 (AYSPRGAKTI…YVRAIEKSIS (111 aa)) folds into the Thioredoxin domain. Catalysis depends on nucleophile residues C95 and C98. A disulfide bond links C95 and C98.

It belongs to the thioredoxin family. Plant M-type subfamily.

The protein localises to the plastid. It localises to the chloroplast. Probable thiol-disulfide oxidoreductase that may be involved in the redox regulation of chloroplastic enzymes. The protein is Thioredoxin M3, chloroplastic of Oryza sativa subsp. japonica (Rice).